A 97-amino-acid polypeptide reads, in one-letter code: Large ribosomal subunit protein uL23 (97 aa).

It belongs to the universal ribosomal protein uL23 family. Part of the 50S ribosomal subunit. Contacts protein L29, and trigger factor when it is bound to the ribosome.

In terms of biological role, one of the early assembly proteins it binds 23S rRNA. One of the proteins that surrounds the polypeptide exit tunnel on the outside of the ribosome. Forms the main docking site for trigger factor binding to the ribosome. This chain is Large ribosomal subunit protein uL23, found in Chelativorans sp. (strain BNC1).